A 237-amino-acid chain; its full sequence is tRNA (guanine-N(7)-)-methyltransferase (237 aa).

The S-adenosyl-L-methionine site is built by Asp-35, Glu-60, Asn-87, and Asp-113. Asp-113 is a catalytic residue. Substrate contacts are provided by Lys-117 and Asp-149.

It belongs to the class I-like SAM-binding methyltransferase superfamily. TrmB family.

It carries out the reaction guanosine(46) in tRNA + S-adenosyl-L-methionine = N(7)-methylguanosine(46) in tRNA + S-adenosyl-L-homocysteine. Its pathway is tRNA modification; N(7)-methylguanine-tRNA biosynthesis. Its function is as follows. Catalyzes the formation of N(7)-methylguanine at position 46 (m7G46) in tRNA. The polypeptide is tRNA (guanine-N(7)-)-methyltransferase (Synechococcus sp. (strain CC9311)).